The primary structure comprises 339 residues: Anthranilate phosphoribosyltransferase (339 aa).

5-phospho-alpha-D-ribose 1-diphosphate-binding positions include Gly79, 82–83 (GD), Ser87, 89–92 (NIST), 107–115 (KHGNRSISS), and Ser119. Gly79 serves as a coordination point for anthranilate. Ser91 serves as a coordination point for Mg(2+). Asn110 serves as a coordination point for anthranilate. Arg165 contacts anthranilate. The Mg(2+) site is built by Asp224 and Glu225.

It belongs to the anthranilate phosphoribosyltransferase family. Homodimer. Mg(2+) serves as cofactor.

It carries out the reaction N-(5-phospho-beta-D-ribosyl)anthranilate + diphosphate = 5-phospho-alpha-D-ribose 1-diphosphate + anthranilate. Its pathway is amino-acid biosynthesis; L-tryptophan biosynthesis; L-tryptophan from chorismate: step 2/5. Catalyzes the transfer of the phosphoribosyl group of 5-phosphorylribose-1-pyrophosphate (PRPP) to anthranilate to yield N-(5'-phosphoribosyl)-anthranilate (PRA). The polypeptide is Anthranilate phosphoribosyltransferase (Listeria innocua serovar 6a (strain ATCC BAA-680 / CLIP 11262)).